Here is a 406-residue protein sequence, read N- to C-terminus: E3 ubiquitin-protein ligase RING1 (406 aa).

At Thr-24 the chain carries Phosphothreonine. The necessary for transcriptional repression stretch occupies residues 30–234 (MDGTEIAVSP…GGAGSEDSGD (205 aa)). Ser-38 bears the Phosphoserine mark. Residues 48 to 88 (CPICLDMLKNTMTTKECLHRFCSDCIVTALRSGNKECPTCR) form an RING-type zinc finger. 3 positions are modified to phosphoserine: Ser-140, Ser-187, and Ser-190. Disordered stretches follow at residues 148–263 (QAMH…GEIE) and 309–354 (QQQE…PSLE). Residues 175–187 (EPGEGEGDGEDVS) are compositionally biased toward acidic residues. The Nuclear localization signal signature appears at 201–204 (KRPR). Residues 205–228 (GGGAGGSSVGTGGGGTGGVGGGAG) show a composition bias toward gly residues. Thr-215 and Thr-220 each carry phosphothreonine. Residues Ser-229 and Ser-232 each carry the phosphoserine modification. Residues 230–406 (EDSGDRGGTL…LCYAPTKDPK (177 aa)) are necessary for interaction with CBX2. Over residues 235–244 (RGGTLGGGTL) the composition is skewed to gly residues. The segment covering 246 to 258 (PPSPPGAPSPPEP) has biased composition (pro residues). Ser-248 and Ser-254 each carry phosphoserine. The span at 315-343 (EPGGPGGGASDTGGPDGCGGEGGGAGGGD) shows a compositional bias: gly residues.

In terms of assembly, component of chromatin-associated Polycomb (PcG) complexes. Interacts with BMI1. Part of the E2F6.com-1 complex in G0 phase composed of E2F6, MGA, MAX, TFDP1, CBX3, BAT8, EUHMTASE1, RING1, RNF2/RING2 MBLR, L3MBTL2 and YAF2. Interacts with CBX2 and PCGF6. Component of a PRC1-like complex. Component of repressive BCOR complex containing Polycomb group subcomplex at least composed of RYBP, PCGF1, BCOR and RNF2/RING2. Interacts with PCGF2, RNF2; CBX6, CBX7 and CBX8. Interacts with PHC2. Interacts with MN1. Interacts with USP26.

The protein resides in the nucleus. It is found in the nucleus speckle. The catalysed reaction is S-ubiquitinyl-[E2 ubiquitin-conjugating enzyme]-L-cysteine + [acceptor protein]-L-lysine = [E2 ubiquitin-conjugating enzyme]-L-cysteine + N(6)-ubiquitinyl-[acceptor protein]-L-lysine.. Its pathway is protein modification; protein ubiquitination. Constitutes one of the E3 ubiquitin-protein ligases that mediate monoubiquitination of 'Lys-119' of histone H2A, thereby playing a central role in histone code and gene regulation. H2A 'Lys-119' ubiquitination gives a specific tag for epigenetic transcriptional repression and participates in X chromosome inactivation of female mammals. Essential component of a Polycomb group (PcG) multiprotein PRC1-like complex, a complex class required to maintain the transcriptionally repressive state of many genes, including Hox genes, throughout development. PcG PRC1 complex acts via chromatin remodeling and modification of histones, rendering chromatin heritably changed in its expressibility. Compared to RNF2/RING2, it does not have the main E3 ubiquitin ligase activity on histone H2A, and it may rather act as a modulator of RNF2/RING2 activity. The sequence is that of E3 ubiquitin-protein ligase RING1 from Homo sapiens (Human).